A 193-amino-acid polypeptide reads, in one-letter code: Guanylate kinase (193 aa).

The 180-residue stretch at 12–191 (DLLTIVAGPT…AANELWLAMN (180 aa)) folds into the Guanylate kinase-like domain. 19–26 (GPTAVGKG) lines the ATP pocket.

It belongs to the guanylate kinase family.

It localises to the cytoplasm. The catalysed reaction is GMP + ATP = GDP + ADP. Its function is as follows. Essential for recycling GMP and indirectly, cGMP. This is Guanylate kinase from Tropheryma whipplei (strain TW08/27) (Whipple's bacillus).